The sequence spans 260 residues: ATP synthase subunit a (260 aa).

A propeptide spans 1 to 11 (MQNTLLRTYIN) (removed in mature form). 6 consecutive transmembrane segments (helical) span residues 37 to 57 (ITTFTLYTIIVLLVVSSLYVL), 96 to 116 (YFPFIYTLFMFILISNLISMI), 126 to 146 (FVFIISLSMIIWLGITILSLF), 152 to 172 (FFSLFVPSGTALPLVPLLVVI), 192 to 212 (IFSGHLLMAILAGLTMTFVQI), and 217 to 237 (LILGFIPLAIILIIMCLEFGI).

Belongs to the ATPase A chain family. F-type ATPases have 2 components, CF(1) - the catalytic core - and CF(0) - the membrane proton channel. CF(1) has five subunits: alpha(3), beta(3), gamma(1), delta(1), epsilon(1). CF(0) has three main subunits: a, b and c.

The protein resides in the mitochondrion inner membrane. Its function is as follows. Mitochondrial membrane ATP synthase (F(1)F(0) ATP synthase or Complex V) produces ATP from ADP in the presence of a proton gradient across the membrane which is generated by electron transport complexes of the respiratory chain. F-type ATPases consist of two structural domains, F(1) - containing the extramembraneous catalytic core and F(0) - containing the membrane proton channel, linked together by a central stalk and a peripheral stalk. During catalysis, ATP synthesis in the catalytic domain of F(1) is coupled via a rotary mechanism of the central stalk subunits to proton translocation. Key component of the proton channel; it may play a direct role in the translocation of protons across the membrane. The sequence is that of ATP synthase subunit a (ATP6) from Candida glabrata (strain ATCC 2001 / BCRC 20586 / JCM 3761 / NBRC 0622 / NRRL Y-65 / CBS 138) (Yeast).